A 110-amino-acid chain; its full sequence is Integration host factor subunit alpha (110 aa).

This sequence belongs to the bacterial histone-like protein family. As to quaternary structure, heterodimer of an alpha and a beta chain.

Its function is as follows. This protein is one of the two subunits of integration host factor, a specific DNA-binding protein that functions in genetic recombination as well as in transcriptional and translational control. The chain is Integration host factor subunit alpha from Nitrobacter hamburgensis (strain DSM 10229 / NCIMB 13809 / X14).